Reading from the N-terminus, the 187-residue chain is Benzene 1,2-dioxygenase subunit beta (187 aa).

This sequence belongs to the bacterial ring-hydroxylating dioxygenase beta subunit family. In terms of assembly, this dioxygenase system consists of four proteins: the two subunits of the hydroxylase component (BnzA and BnzB), a ferredoxin (BnzC) and a ferredoxin reductase (BnzD). [2Fe-2S] cluster is required as a cofactor. Fe cation serves as cofactor.

The catalysed reaction is benzene + NADH + O2 + H(+) = cis-1,2-dihydrobenzene-1,2-diol + NAD(+). It catalyses the reaction toluene + NADH + O2 + H(+) = (1S,2R)-3-methylcyclohexa-3,5-diene-1,2-diol + NAD(+). Its pathway is aromatic compound metabolism; benzene degradation; catechol from benzene: step 1/2. It participates in xenobiotic degradation; toluene degradation. The protein operates within xenobiotic degradation; xylene degradation. In terms of biological role, catalyzes both the oxidation of benzene and toluene. The beta subunit may be responsible for the substrate specificity of the enzyme. The sequence is that of Benzene 1,2-dioxygenase subunit beta (bnzB) from Pseudomonas putida (strain ATCC 700007 / DSM 6899 / JCM 31910 / BCRC 17059 / LMG 24140 / F1).